Reading from the N-terminus, the 292-residue chain is G1/S-specific cyclin-D3 (292 aa).

The Cyclin N-terminal domain maps to 27 to 152 (VLQSLLRLEE…LVLGKLKWDL (126 aa)). Positions 256 to 292 (REAAQTAPSPVPKAPRGSSSQGPSQTSTPTDVTAIHL) are disordered. 2 positions are modified to phosphoserine: Ser-264 and Ser-279. A compositionally biased stretch (low complexity) spans 272–285 (GSSSQGPSQTSTPT). Thr-283 carries the phosphothreonine modification.

Belongs to the cyclin family. Cyclin D subfamily. In terms of assembly, interacts with the CDK4 and CDK6 protein kinases to form a serine/threonine kinase holoenzyme complex. The cyclin subunit imparts substrate specificity to the complex. Interacts with ATF5. Interacts with EIF3K. Component of the ternary complex cyclin D/CDK4/CDKN1B required for nuclear translocation and modulation of CDK4-mediated kinase activity. Can form similar complexes with either CDKN1A or CDKN2A. In terms of processing, phosphorylation at Thr-283 by MAP kinases is required for ubiquitination and degradation by the DCX(AMBRA1) complex. Post-translationally, ubiquitinated by the DCX(AMBRA1) complex during the transition from G1 to S cell phase, leading to its degradation: ubiquitination is dependent on Thr-283 phosphorylation. The DCX(AMBRA1) complex represents the major regulator of CCND3 stability during the G1/S transition. Polyubiquitinated by the SCF(FBXL2) complex, leading to proteasomal degradation.

The protein localises to the nucleus. The protein resides in the cytoplasm. Functionally, regulatory component of the cyclin D3-CDK4 (DC) complex that phosphorylates and inhibits members of the retinoblastoma (RB) protein family including RB1 and regulates the cell-cycle during G(1)/S transition. Phosphorylation of RB1 allows dissociation of the transcription factor E2F from the RB/E2F complex and the subsequent transcription of E2F target genes which are responsible for the progression through the G(1) phase. Hypophosphorylates RB1 in early G(1) phase. Cyclin D-CDK4 complexes are major integrators of various mitogenenic and antimitogenic signals. Component of the ternary complex, cyclin D3/CDK4/CDKN1B, required for nuclear translocation and activity of the cyclin D-CDK4 complex. Shows transcriptional coactivator activity with ATF5 independently of CDK4. The polypeptide is G1/S-specific cyclin-D3 (Mus musculus (Mouse)).